The chain runs to 148 residues: D-aminoacyl-tRNA deacylase (148 aa).

A Gly-cisPro motif, important for rejection of L-amino acids motif is present at residues 137 to 138 (GP).

The protein belongs to the DTD family. In terms of assembly, homodimer.

Its subcellular location is the cytoplasm. It catalyses the reaction glycyl-tRNA(Ala) + H2O = tRNA(Ala) + glycine + H(+). It carries out the reaction a D-aminoacyl-tRNA + H2O = a tRNA + a D-alpha-amino acid + H(+). Its function is as follows. An aminoacyl-tRNA editing enzyme that deacylates mischarged D-aminoacyl-tRNAs. Also deacylates mischarged glycyl-tRNA(Ala), protecting cells against glycine mischarging by AlaRS. Acts via tRNA-based rather than protein-based catalysis; rejects L-amino acids rather than detecting D-amino acids in the active site. By recycling D-aminoacyl-tRNA to D-amino acids and free tRNA molecules, this enzyme counteracts the toxicity associated with the formation of D-aminoacyl-tRNA entities in vivo and helps enforce protein L-homochirality. This is D-aminoacyl-tRNA deacylase from Deinococcus geothermalis (strain DSM 11300 / CIP 105573 / AG-3a).